Consider the following 276-residue polypeptide: Rhomboid protease GlpG (276 aa).

The next 6 membrane-spanning stretches (helical) occupy residues 94 to 114 (GPFT…QNLL), 142 to 162 (AFMH…WYLG), 169 to 189 (IGSG…GFVQ), 192 to 212 (FSGP…GYVW), 229 to 249 (LILF…GMAI), and 252 to 272 (GAHV…TLHG). Catalysis depends on Ser201, which acts as the Nucleophile. Residue His254 is part of the active site.

This sequence belongs to the peptidase S54 family.

The protein localises to the cell inner membrane. It carries out the reaction Cleaves type-1 transmembrane domains using a catalytic dyad composed of serine and histidine that are contributed by different transmembrane domains.. Its function is as follows. Rhomboid-type serine protease that catalyzes intramembrane proteolysis. The sequence is that of Rhomboid protease GlpG from Klebsiella pneumoniae (strain 342).